The primary structure comprises 379 residues: Cobalt-precorrin-5B C(1)-methyltransferase (379 aa).

The protein belongs to the CbiD family.

The catalysed reaction is Co-precorrin-5B + S-adenosyl-L-methionine = Co-precorrin-6A + S-adenosyl-L-homocysteine. The protein operates within cofactor biosynthesis; adenosylcobalamin biosynthesis; cob(II)yrinate a,c-diamide from sirohydrochlorin (anaerobic route): step 6/10. Functionally, catalyzes the methylation of C-1 in cobalt-precorrin-5B to form cobalt-precorrin-6A. The polypeptide is Cobalt-precorrin-5B C(1)-methyltransferase (Cyanothece sp. (strain PCC 7425 / ATCC 29141)).